A 310-amino-acid chain; its full sequence is Tryptophan 2,3-dioxygenase (310 aa).

A disordered region spans residues 1–36 (MQPPGEDAPAGCPFSGARAAHSAPAAPAAHEASHVP). The segment covering 15 to 36 (SGARAAHSAPAAPAAHEASHVP) has biased composition (low complexity). Substrate-binding positions include 79–83 (FIIQH), Tyr-141, and Arg-145. His-268 contributes to the heme binding site. Thr-282 contacts substrate.

Belongs to the tryptophan 2,3-dioxygenase family. In terms of assembly, homotetramer. Heme is required as a cofactor.

It carries out the reaction L-tryptophan + O2 = N-formyl-L-kynurenine. The protein operates within amino-acid degradation; L-tryptophan degradation via kynurenine pathway; L-kynurenine from L-tryptophan: step 1/2. Functionally, heme-dependent dioxygenase that catalyzes the oxidative cleavage of the L-tryptophan (L-Trp) pyrrole ring and converts L-tryptophan to N-formyl-L-kynurenine. Catalyzes the oxidative cleavage of the indole moiety. This chain is Tryptophan 2,3-dioxygenase, found in Burkholderia lata (strain ATCC 17760 / DSM 23089 / LMG 22485 / NCIMB 9086 / R18194 / 383).